The following is a 562-amino-acid chain: Arginine--tRNA ligase (562 aa).

Positions 130–140 (ANPTGPLHIGH) match the 'HIGH' region motif.

This sequence belongs to the class-I aminoacyl-tRNA synthetase family. Monomer.

It localises to the cytoplasm. It carries out the reaction tRNA(Arg) + L-arginine + ATP = L-arginyl-tRNA(Arg) + AMP + diphosphate. In Geobacter metallireducens (strain ATCC 53774 / DSM 7210 / GS-15), this protein is Arginine--tRNA ligase.